The primary structure comprises 344 residues: Tripartite motif-containing protein 44 (344 aa).

The segment at 69–165 (PPASGDDALP…ETEAESEFDP (97 aa)) is disordered. Over residues 88-165 (EGEVESEVGE…ETEAESEFDP (78 aa)) the composition is skewed to acidic residues. Residues 174–215 (VAKRKCPDHGLDLSTYCQEDRQLICVLCPVIGAHRGHQLSTL) form a B box-type zinc finger. Zn(2+)-binding residues include Cys-179, His-182, Cys-201, and His-207. Residues 290–325 (AHVTEILADIQSHMDRLMTQMAQAKEQLDTSNESAE) adopt a coiled-coil conformation. Residues 309 to 344 (QMAQAKEQLDTSNESAEPKAEGDEEGPSGASEEEDT) form a disordered region. Residues 330–344 (GDEEGPSGASEEEDT) are compositionally biased toward acidic residues. Phosphoserine is present on residues Ser-336 and Ser-339.

As to quaternary structure, interacts (via coiled coil) with TRIM17 (via coiled coil).

Functionally, may play a role in the process of differentiation and maturation of neuronal cells. May regulate the activity of TRIM17. Is a negative regulator of PAX6 expression. In Rattus norvegicus (Rat), this protein is Tripartite motif-containing protein 44 (Trim44).